The primary structure comprises 122 residues: Fluoride-specific ion channel FluC (122 aa).

The next 4 membrane-spanning stretches (helical) occupy residues 4 to 24 (LAVL…SIFI), 33 to 53 (LGTM…SIYL), 66 to 86 (LLIT…LEGI), and 95 to 115 (LKAF…VALG). Residues glycine 73 and threonine 76 each contribute to the Na(+) site.

It belongs to the fluoride channel Fluc/FEX (TC 1.A.43) family.

It localises to the cell inner membrane. The catalysed reaction is fluoride(in) = fluoride(out). Its activity is regulated as follows. Na(+) is not transported, but it plays an essential structural role and its presence is essential for fluoride channel function. Fluoride-specific ion channel. Important for reducing fluoride concentration in the cell, thus reducing its toxicity. The protein is Fluoride-specific ion channel FluC of Hydrogenobaculum sp. (strain Y04AAS1).